A 105-amino-acid polypeptide reads, in one-letter code: Heat shock protein HspQ (105 aa).

Residues Ser-74 to Asn-105 are disordered.

This sequence belongs to the HspQ family.

Its subcellular location is the cytoplasm. In terms of biological role, involved in the degradation of certain denaturated proteins, including DnaA, during heat shock stress. This chain is Heat shock protein HspQ, found in Citrobacter koseri (strain ATCC BAA-895 / CDC 4225-83 / SGSC4696).